We begin with the raw amino-acid sequence, 225 residues long: MDHTYEVHQIKTYHQMWSNYCYIIADRSKKSAIAVDPSWEIDKITDKLHELDVDLSAILLTHSHYDHVNLAEPLQQIYHSDIYMSSAEIDFYQFRCRNLIALEDGQTFAAGGFIIRSILTPGHTAGGMCYLLSDHLFTGDTVFTEGCGICGDRGSSAEDMFHSIQRIKASIPPHVRVYPGHSFGEKPGQKMESLLKNNIYFQIEKKEHFVNFRNRKNQKGLFHFK.

His62, His64, Asp66, His67, His123, Asp140, and His181 together coordinate Zn(2+).

It belongs to the metallo-beta-lactamase superfamily. Zn(2+) is required as a cofactor.

Its subcellular location is the cytoplasm. Its pathway is antibiotic biosynthesis; bacillaene biosynthesis. Probably involved in some intermediate steps for the synthesis of the antibiotic polyketide bacillaene which is involved in secondary metabolism. This chain is Probable polyketide biosynthesis zinc-dependent hydrolase BaeB (baeB), found in Bacillus velezensis (strain DSM 23117 / BGSC 10A6 / LMG 26770 / FZB42) (Bacillus amyloliquefaciens subsp. plantarum).